The primary structure comprises 566 residues: Urease subunit alpha (566 aa).

A Urease domain is found at 128–566 (GGVDTHIHFI…LPMAQRYFLF (439 aa)). Ni(2+)-binding residues include His-133, His-135, and Lys-216. An N6-carboxylysine modification is found at Lys-216. His-218 contacts substrate. 2 residues coordinate Ni(2+): His-245 and His-271. Residue His-319 is the Proton donor of the active site. Residue Asp-359 participates in Ni(2+) binding.

This sequence belongs to the metallo-dependent hydrolases superfamily. Urease alpha subunit family. As to quaternary structure, may form a heterohexamer of 3 UreC (alpha) and 3 UreAB (gamma/beta) subunits. May also form a heterotrimer of UreA (gamma), UreB (beta) and UreC (alpha) subunits. Three heterotrimers associate to form the active enzyme. Ni cation serves as cofactor. In terms of processing, carboxylation allows a single lysine to coordinate two nickel ions.

It localises to the cytoplasm. The enzyme catalyses urea + 2 H2O + H(+) = hydrogencarbonate + 2 NH4(+). It participates in nitrogen metabolism; urea degradation; CO(2) and NH(3) from urea (urease route): step 1/1. The protein is Urease subunit alpha of Pseudomonas syringae pv. tomato (strain ATCC BAA-871 / DC3000).